Consider the following 247-residue polypeptide: MAGHSKWSQIKRTKAVVDAKRGAVFTRLGREIMVAARAGADPAGNFQLRTAISKARAAGVPASNIERAIAKGSGQAGDGAQLEDVRYEGYGPGGMAVLVEALTDNRNRTAADLRLAFSKNGGNLGENGCVAYLFEHRSEVILNAGPDDEERLLESLLELDADGYELLDGAVVVHGPFEALESLQDGLRHADWNVREWGHHWSAQTSVSVNDPETARSCLKLLDALDGLDDVRSVSANLDLADELEID.

This sequence belongs to the TACO1 family.

The protein localises to the cytoplasm. This Synechococcus sp. (strain CC9605) protein is Probable transcriptional regulatory protein Syncc9605_2132.